The following is a 410-amino-acid chain: Divergent protein kinase domain 1A (410 aa).

Topologically, residues 1-5 (MARLS) are cytoplasmic. The helical transmembrane segment at 6 to 26 (YVRIKYLFFSWLAVFIGSWVI) threads the bilayer. Residues 27–410 (YVRYNSYTEL…WKKISHTNDS (384 aa)) lie on the Lumenal side of the membrane.

The protein belongs to the DIPK family. In terms of processing, among the many cysteines in the lumenal domain, most are probably involved in disulfide bonds.

The protein localises to the endoplasmic reticulum membrane. The polypeptide is Divergent protein kinase domain 1A (dipk1a) (Xenopus laevis (African clawed frog)).